The chain runs to 517 residues: Nucleoside transporter FUN26 (517 aa).

Positions 1–63 (MSTSADTDTI…EREQSVSTEP (63 aa)) are disordered. The span at 25–44 (THSEEISRSGEEHESENNEH) shows a compositional bias: basic and acidic residues. Phosphoserine is present on residues S45 and S58. Transmembrane regions (helical) follow at residues 76 to 96 (LSYI…NCIL), 116 to 136 (IFTS…NIYL), 151 to 171 (LVWE…HFLL), 174 to 194 (WFNF…TAMT), 214 to 234 (MVGQ…LAFI), 243 to 263 (GGIL…VVMF), 344 to 364 (LVLS…FASA), 367 to 387 (VTGL…LWNL), 411 to 431 (TFIY…FTAI), 446 to 466 (IVDL…GHVI), and 492 to 512 (IFVS…VFII).

Belongs to the SLC29A/ENT transporter (TC 2.A.57) family.

It localises to the membrane. Its function is as follows. Has broad nucleoside selectivity (uridine, adenosine and cytidine) and most likely functions to transport nucleosides across intracellular membranes. This chain is Nucleoside transporter FUN26 (FUN26), found in Saccharomyces cerevisiae (strain ATCC 204508 / S288c) (Baker's yeast).